We begin with the raw amino-acid sequence, 330 residues long: Ketol-acid reductoisomerase (NADP(+)) (330 aa).

A KARI N-terminal Rossmann domain is found at Ala-2–Thr-182. NADP(+)-binding positions include Tyr-25 to Gln-28, Ser-51, Ser-53, and Asp-83 to Gln-86. Residue His-108 is part of the active site. Gly-134 is a binding site for NADP(+). Residues Ser-183–Leu-328 form the KARI C-terminal knotted domain. 4 residues coordinate Mg(2+): Asp-191, Glu-195, Glu-227, and Glu-231. Residue Ser-252 participates in substrate binding.

It belongs to the ketol-acid reductoisomerase family. The cofactor is Mg(2+).

The catalysed reaction is (2R)-2,3-dihydroxy-3-methylbutanoate + NADP(+) = (2S)-2-acetolactate + NADPH + H(+). It catalyses the reaction (2R,3R)-2,3-dihydroxy-3-methylpentanoate + NADP(+) = (S)-2-ethyl-2-hydroxy-3-oxobutanoate + NADPH + H(+). The protein operates within amino-acid biosynthesis; L-isoleucine biosynthesis; L-isoleucine from 2-oxobutanoate: step 2/4. It participates in amino-acid biosynthesis; L-valine biosynthesis; L-valine from pyruvate: step 2/4. Involved in the biosynthesis of branched-chain amino acids (BCAA). Catalyzes an alkyl-migration followed by a ketol-acid reduction of (S)-2-acetolactate (S2AL) to yield (R)-2,3-dihydroxy-isovalerate. In the isomerase reaction, S2AL is rearranged via a Mg-dependent methyl migration to produce 3-hydroxy-3-methyl-2-ketobutyrate (HMKB). In the reductase reaction, this 2-ketoacid undergoes a metal-dependent reduction by NADPH to yield (R)-2,3-dihydroxy-isovalerate. This is Ketol-acid reductoisomerase (NADP(+)) from Synechococcus elongatus (strain ATCC 33912 / PCC 7942 / FACHB-805) (Anacystis nidulans R2).